We begin with the raw amino-acid sequence, 166 residues long: Deglycase PYRAB04690 (166 aa).

The 166-residue stretch at Met1–Lys166 folds into the PfpI endopeptidase domain. His101 is a catalytic residue.

This sequence belongs to the peptidase C56 family. In terms of assembly, homohexamer formed by a dimer of trimers that assemble into a hollow ring structure.

The protein resides in the cytoplasm. It catalyses the reaction N(omega)-(1-hydroxy-2-oxopropyl)-L-arginyl-[protein] + H2O = lactate + L-arginyl-[protein] + H(+). The enzyme catalyses N(6)-(1-hydroxy-2-oxopropyl)-L-lysyl-[protein] + H2O = lactate + L-lysyl-[protein] + H(+). It carries out the reaction S-(1-hydroxy-2-oxopropyl)-L-cysteinyl-[protein] + H2O = lactate + L-cysteinyl-[protein] + H(+). The catalysed reaction is N(omega)-(1-hydroxy-2-oxoethyl)-L-arginyl-[protein] + H2O = L-arginyl-[protein] + glycolate + H(+). It catalyses the reaction N(6)-(1-hydroxy-2-oxoethyl)-L-lysyl-[protein] + H2O = glycolate + L-lysyl-[protein] + H(+). The enzyme catalyses S-(1-hydroxy-2-oxoethyl)-L-cysteinyl-[protein] + H2O = glycolate + L-cysteinyl-[protein] + H(+). Its function is as follows. Deglycase that catalyzes the deglycation of the Maillard adducts formed between amino groups of proteins and reactive carbonyl groups of glyoxals. Thus, functions as a protein deglycase that repairs methylglyoxal- and glyoxal-glycated proteins, and releases repaired proteins and lactate or glycolate, respectively. Deglycates cysteine, arginine and lysine residues in proteins, and thus reactivates these proteins by reversing glycation by glyoxals. Acts on early glycation intermediates (hemithioacetals and aminocarbinols), preventing the formation of advanced glycation endproducts (AGE) that cause irreversible damage. Also displays proteolytic activity. This Pyrococcus abyssi (strain GE5 / Orsay) protein is Deglycase PYRAB04690.